Reading from the N-terminus, the 413-residue chain is Serine hydroxymethyltransferase (413 aa).

Residues L117 and 121 to 123 (GHL) each bind (6S)-5,6,7,8-tetrahydrofolate. N6-(pyridoxal phosphate)lysine is present on K226. 349 to 351 (SPF) is a (6S)-5,6,7,8-tetrahydrofolate binding site.

This sequence belongs to the SHMT family. Homodimer. Requires pyridoxal 5'-phosphate as cofactor.

The protein localises to the cytoplasm. The catalysed reaction is (6R)-5,10-methylene-5,6,7,8-tetrahydrofolate + glycine + H2O = (6S)-5,6,7,8-tetrahydrofolate + L-serine. It participates in one-carbon metabolism; tetrahydrofolate interconversion. It functions in the pathway amino-acid biosynthesis; glycine biosynthesis; glycine from L-serine: step 1/1. In terms of biological role, catalyzes the reversible interconversion of serine and glycine with tetrahydrofolate (THF) serving as the one-carbon carrier. This reaction serves as the major source of one-carbon groups required for the biosynthesis of purines, thymidylate, methionine, and other important biomolecules. Also exhibits THF-independent aldolase activity toward beta-hydroxyamino acids, producing glycine and aldehydes, via a retro-aldol mechanism. In Listeria innocua serovar 6a (strain ATCC BAA-680 / CLIP 11262), this protein is Serine hydroxymethyltransferase.